A 274-amino-acid chain; its full sequence is SPbeta prophage-derived uncharacterized protein YomD (274 aa).

This chain is SPbeta prophage-derived uncharacterized protein YomD (yomD), found in Bacillus subtilis (strain 168).